A 416-amino-acid chain; its full sequence is PDZ and LIM domain protein 7 (416 aa).

The PDZ domain maps to 1–85; that stretch reads MESYKVMLNG…RLCLTLSRAQ (85 aa). Disordered stretches follow at residues 145 to 191 and 202 to 221; these read CTPQ…AVDP and TSTV…MQNR. A compositionally biased stretch (low complexity) spans 168-181; that stretch reads PGLAPRTPAATPGP. LIM zinc-binding domains lie at 239–297, 298–357, and 358–416; these read PLCY…TRYA, PSCA…MFGT, and KCRG…FSHV.

As to quaternary structure, interacts with various PKC isoforms through the LIM zinc-binding domains. Interacts with TPM2. Interacts with TBX4 and TBX5.

Its subcellular location is the cytoplasm. It localises to the cytoskeleton. The protein localises to the myofibril. The protein resides in the sarcomere. It is found in the z line. Functionally, may function as a scaffold on which the coordinated assembly of proteins can occur. May play a role as an adapter that, via its PDZ domain, localizes LIM-binding proteins to actin filaments of both skeletal muscle and nonmuscle tissues. May be involved in bone formation. This chain is PDZ and LIM domain protein 7 (PDLIM7), found in Gallus gallus (Chicken).